Consider the following 779-residue polypeptide: Probable glutamine--tRNA ligase (779 aa).

ATP contacts are provided by residues 268 to 270 (EPN) and 274 to 280 (HIGHAKA). Positions 300 and 440 each coordinate L-glutamine. Residues T459, 488 to 489 (RL), and 496 to 498 (LSK) contribute to the ATP site.

Belongs to the class-I aminoacyl-tRNA synthetase family.

It catalyses the reaction tRNA(Gln) + L-glutamine + ATP = L-glutaminyl-tRNA(Gln) + AMP + diphosphate. This is Probable glutamine--tRNA ligase (glnS) from Dictyostelium discoideum (Social amoeba).